Here is a 108-residue protein sequence, read N- to C-terminus: TYRO protein tyrosine kinase-binding protein (108 aa).

The signal sequence occupies residues 1 to 25 (MGRLGPSNGLLPLLLAVGGFSLVQA). At 26-36 (QRECSCSAVSP) the chain is on the extracellular side. The chain crosses the membrane as a helical span at residues 37-57 (GILAGIVLGDLVLTLLIALAV). Aspartate 46 is a binding site for Ca(2+). Over 58–108 (YSLGRLVPRTRGAVDVTRKQHIAETESAYQELQGQRSDVYSDLNTQRQYYK) the chain is Cytoplasmic. Positions 75 to 103 (RKQHIAETESAYQELQGQRSDVYSDLNTQ) constitute an ITAM domain. 2 positions are modified to phosphotyrosine: tyrosine 86 and tyrosine 97.

Belongs to the TYROBP family. In terms of assembly, homodimer; disulfide-linked. Homotrimer; disulfide-linked. Homotetramer; disulfide-linked. Homotrimers and homotetramers form when low levels of partner receptors are available and is competitive with assembly with interacting receptors. They may represent alternative oligomerization states or may be intermediates in the receptor assembly process. Binding of a metal cation aids in homooligomerization through coordination of the metal ion by the subunits of the oligomer. Interacts with TREM1. Interacts with TREM2. Interacts with CLECSF5. Interacts with CD300LB and CD300C2. Interacts with CD300E. Interacts (via ITAM domain) with SYK (via SH2 domains); activates SYK mediating neutrophils and macrophages integrin-mediated activation. Interacts with KLRC2. Interacts with CD300H. Interacts with KLRD1. Interacts with SIGLEC1. In terms of processing, following ligand binding by associated receptors, tyrosine phosphorylated in the ITAM domain which leads to activation of additional tyrosine kinases and subsequent cell activation. Highly expressed in spleen, liver and thymus. Weakly expressed in lymph nodes. Expressed in peripheral blood leukocytes, granulocytes, macrophages, and monocytes. LPS does not increase expression in granulocytes.

Its subcellular location is the cell membrane. Adapter protein which non-covalently associates with activating receptors found on the surface of a variety of immune cells to mediate signaling and cell activation following ligand binding by the receptors. TYROBP is tyrosine-phosphorylated in the ITAM domain following ligand binding by the associated receptors which leads to activation of additional tyrosine kinases and subsequent cell activation. Also has an inhibitory role in some cells. Non-covalently associates with activating receptors of the CD300 family to mediate cell activation. Also mediates cell activation through association with activating receptors of the CD200R family. Required for neutrophil activation mediated by integrin. Required for the activation of myeloid cells mediated by the CLEC5A/MDL1 receptor. Associates with natural killer (NK) cell receptors such as the KLRD1/KLRC2 heterodimer to mediate NK cell activation. Associates with TREM1 to mediate activation of neutrophils and monocytes. Associates with TREM2 on monocyte-derived dendritic cells to mediate up-regulation of chemokine receptor CCR7 and dendritic cell maturation and survival. Association with TREM2 mediates cytokine-induced formation of multinucleated giant cells which are formed by the fusion of macrophages. Stabilizes the TREM2 C-terminal fragment (TREM2-CTF) produced by TREM2 ectodomain shedding which suppresses the release of pro-inflammatory cytokines. In microglia, required with TREM2 for phagocytosis of apoptotic neurons. Required with ITGAM/CD11B in microglia to control production of microglial superoxide ions which promote the neuronal apoptosis that occurs during brain development. Promotes pro-inflammatory responses in microglia following nerve injury which accelerates degeneration of injured neurons. Positively regulates the expression of the IRAK3/IRAK-M kinase and IL10 production by liver dendritic cells and inhibits their T cell allosimulatory ability. Negatively regulates B cell proliferation. Required for CSF1-mediated osteoclast cytoskeletal organization. Positively regulates multinucleation during osteoclast development. This is TYRO protein tyrosine kinase-binding protein from Sus scrofa (Pig).